The following is an 887-amino-acid chain: 3-hydroxy-3-methylglutaryl-coenzyme A reductase (887 aa).

Residues 1 to 9 are Cytoplasmic-facing; that stretch reads MLSRLFRMH. The helical transmembrane segment at 10–39 threads the bilayer; sequence GLFVASHPWEVIVGTVTLTICMMSMNMFTG. Residues 40–56 are Lumenal-facing; the sequence is NNKICGWNYECPKFEED. Residues 57–78 form a helical membrane-spanning segment; that stretch reads VLSSDIIILTITRCIAILYIYF. The region spanning 61–218 is the SSD domain; sequence DIIILTITRC…MTFFPACVSL (158 aa). The INSIG-binding motif motif lies at 75-78; that stretch reads YIYF. Over 79–89 the chain is Cytoplasmic; sequence QFQNLRQLGSK. Residue Lys-89 forms a Glycyl lysine isopeptide (Lys-Gly) (interchain with G-Cter in ubiquitin) linkage. A helical membrane pass occupies residues 90–114; sequence YILGIAGLFTIFSSFVFSTVVIHFL. The Lumenal segment spans residues 115–123; sequence DKELTGLNE. The helical transmembrane segment at 124–149 threads the bilayer; sequence ALPFFLLLIDLSRASALAKFALSSNS. Residues 150–159 lie on the Cytoplasmic side of the membrane; sequence QDEVRENIAR. Residues 160-187 form a helical membrane-spanning segment; that stretch reads GMAILGPTFTLDALVECLVIGVGTMSGV. Over 188 to 191 the chain is Lumenal; sequence RQLE. A helical transmembrane segment spans residues 192 to 220; it reads IMCCFGCMSVLANYFVFMTFFPACVSLVL. Over 221 to 248 the chain is Cytoplasmic; sequence ELSRESREGRPIWQLSHFARVLEEEENK. A Glycyl lysine isopeptide (Lys-Gly) (interchain with G-Cter in ubiquitin) cross-link involves residue Lys-248. Residues 249-275 form a helical membrane-spanning segment; sequence PNPVTQRVKMIMSLGLVLVHAHSRWIA. Residues 276 to 314 are Lumenal-facing; the sequence is DPSPQNSTAEQSKVSLGLAEDVSKRIEPSVSLWQFYLSK. A glycan (N-linked (GlcNAc...) asparagine) is linked at Asn-281. The chain crosses the membrane as a helical span at residues 315-339; it reads MISMDIEQVITLSLALLLAVKYIFF. Residues 340–887 are Cytoplasmic-facing; the sequence is EQAETESTLS…LQGTCTKKAA (548 aa). Active-site charge relay system residues include Glu-558, Lys-690, and Asp-766. The active-site Proton donor is His-865. At Ser-871 the chain carries Phosphoserine; by AMPK.

This sequence belongs to the HMG-CoA reductase family. In terms of assembly, homotetramer. Homodimer. Interacts (via its SSD) with INSIG1; the interaction, accelerated by sterols, leads to the recruitment of HMGCR to AMFR/gp78 for its ubiquitination by the sterol-mediated ERAD pathway. Interacts with UBIAD1. Undergoes sterol-mediated ubiquitination and ER-associated degradation (ERAD). Accumulation of sterols in the endoplasmic reticulum (ER) membrane, triggers binding of the reductase to the ER membrane protein INSIG1 or INSIG2. The INSIG1 binding leads to the recruitment of the ubiquitin ligase, AMFR/gp78, RNF139 or RNF145, initiating ubiquitination of the reductase. The ubiquitinated reductase is then extracted from the ER membrane and delivered to cytosolic 26S proteosomes by a mechanism probably mediated by the ATPase Valosin-containing protein VCP/p97. The INSIG2-binding leads to the recruitment of the ubiquitin ligase RNF139, initiating ubiquitination of the reductase. Lys-248 is the main site of ubiquitination. Ubiquitination is enhanced by the presence of a geranylgeranylated protein. Post-translationally, N-glycosylated. Deglycosylated by NGLY1 on release from the endoplasmic reticulum (ER) in a sterol-mediated manner. In terms of processing, phosphorylated. Phosphorylation at Ser-871 reduces the catalytic activity.

Its subcellular location is the endoplasmic reticulum membrane. The protein resides in the peroxisome membrane. It carries out the reaction (R)-mevalonate + 2 NADP(+) + CoA = (3S)-3-hydroxy-3-methylglutaryl-CoA + 2 NADPH + 2 H(+). Its pathway is metabolic intermediate biosynthesis; (R)-mevalonate biosynthesis; (R)-mevalonate from acetyl-CoA: step 3/3. Regulated by a negative feedback mechanism through sterols and non-sterol metabolites derived from mevalonate. Phosphorylation at Ser-871 down-regulates the catalytic activity. In terms of biological role, catalyzes the conversion of (3S)-hydroxy-3-methylglutaryl-CoA (HMG-CoA) to mevalonic acid, the rate-limiting step in the synthesis of cholesterol and other isoprenoids, thus plays a critical role in cellular cholesterol homeostasis. This is 3-hydroxy-3-methylglutaryl-coenzyme A reductase (Hmgcr) from Rattus norvegicus (Rat).